An 85-amino-acid chain; its full sequence is Putative membrane protein insertion efficiency factor (85 aa).

The protein belongs to the UPF0161 family.

The protein localises to the cell inner membrane. In terms of biological role, could be involved in insertion of integral membrane proteins into the membrane. The polypeptide is Putative membrane protein insertion efficiency factor (Shewanella woodyi (strain ATCC 51908 / MS32)).